A 172-amino-acid chain; its full sequence is Phosphopantetheine adenylyltransferase (172 aa).

T14 is a binding site for substrate. ATP-binding positions include 14–15 and H22; that span reads TF. K46, L78, and R92 together coordinate substrate. ATP is bound by residues 93-95, E103, and 128-134; these read GMR and WLYISST.

The protein belongs to the bacterial CoaD family. As to quaternary structure, homohexamer. Mg(2+) serves as cofactor.

Its subcellular location is the cytoplasm. It catalyses the reaction (R)-4'-phosphopantetheine + ATP + H(+) = 3'-dephospho-CoA + diphosphate. It functions in the pathway cofactor biosynthesis; coenzyme A biosynthesis; CoA from (R)-pantothenate: step 4/5. Functionally, reversibly transfers an adenylyl group from ATP to 4'-phosphopantetheine, yielding dephospho-CoA (dPCoA) and pyrophosphate. The polypeptide is Phosphopantetheine adenylyltransferase (Solidesulfovibrio magneticus (strain ATCC 700980 / DSM 13731 / RS-1) (Desulfovibrio magneticus)).